A 98-amino-acid polypeptide reads, in one-letter code: NADH-ubiquinone oxidoreductase chain 4L (98 aa).

A run of 3 helical transmembrane segments spans residues 1–21 (MPSISTNIILAFTTALLGTLI), 26–46 (LMSSLLCLEGMMLSMFILTSL), and 61–81 (IILLVFAACEAAIGLALLVMV).

The protein belongs to the complex I subunit 4L family. Core subunit of respiratory chain NADH dehydrogenase (Complex I) which is composed of 45 different subunits.

It localises to the mitochondrion inner membrane. It carries out the reaction a ubiquinone + NADH + 5 H(+)(in) = a ubiquinol + NAD(+) + 4 H(+)(out). Functionally, core subunit of the mitochondrial membrane respiratory chain NADH dehydrogenase (Complex I) which catalyzes electron transfer from NADH through the respiratory chain, using ubiquinone as an electron acceptor. Part of the enzyme membrane arm which is embedded in the lipid bilayer and involved in proton translocation. The polypeptide is NADH-ubiquinone oxidoreductase chain 4L (MT-ND4L) (Otolemur crassicaudatus (Brown greater galago)).